Reading from the N-terminus, the 419-residue chain is UDP-N-acetylglucosamine 1-carboxyvinyltransferase 2 (419 aa).

24–25 serves as a coordination point for phosphoenolpyruvate; it reads KN. Arg94 contributes to the UDP-N-acetyl-alpha-D-glucosamine binding site. Catalysis depends on Cys118, which acts as the Proton donor. Cys118 carries the post-translational modification 2-(S-cysteinyl)pyruvic acid O-phosphothioketal. UDP-N-acetyl-alpha-D-glucosamine is bound by residues 123–127, Asp307, and Ile329; that span reads RPIDQ.

The protein belongs to the EPSP synthase family. MurA subfamily.

The protein resides in the cytoplasm. The catalysed reaction is phosphoenolpyruvate + UDP-N-acetyl-alpha-D-glucosamine = UDP-N-acetyl-3-O-(1-carboxyvinyl)-alpha-D-glucosamine + phosphate. It functions in the pathway cell wall biogenesis; peptidoglycan biosynthesis. In terms of biological role, cell wall formation. Adds enolpyruvyl to UDP-N-acetylglucosamine. The protein is UDP-N-acetylglucosamine 1-carboxyvinyltransferase 2 of Staphylococcus epidermidis (strain ATCC 35984 / DSM 28319 / BCRC 17069 / CCUG 31568 / BM 3577 / RP62A).